Reading from the N-terminus, the 351-residue chain is Holliday junction branch migration complex subunit RuvB (351 aa).

Residues 1–12 (MGRFEDDAEVED) are compositionally biased toward acidic residues. The tract at residues 1–23 (MGRFEDDAEVEDREVSPALTVGE) is disordered. The interval 1-191 (MGRFEDDAEV…FGFTAHMDFY (191 aa)) is large ATPase domain (RuvB-L). ATP-binding positions include Leu-30, Arg-31, Gly-72, Lys-75, Thr-76, Ser-77, 138–140 (EDF), Arg-181, Tyr-191, and Arg-228. Mg(2+) is bound at residue Thr-76. The interval 192-262 (EPVELERVLA…IAKSALEVYD (71 aa)) is small ATPAse domain (RuvB-S). Residues 265 to 351 (ELGLDRLDRA…TGIGQAGLFD (87 aa)) form a head domain (RuvB-H) region. DNA is bound by residues Arg-320 and Arg-325.

It belongs to the RuvB family. As to quaternary structure, homohexamer. Forms an RuvA(8)-RuvB(12)-Holliday junction (HJ) complex. HJ DNA is sandwiched between 2 RuvA tetramers; dsDNA enters through RuvA and exits via RuvB. An RuvB hexamer assembles on each DNA strand where it exits the tetramer. Each RuvB hexamer is contacted by two RuvA subunits (via domain III) on 2 adjacent RuvB subunits; this complex drives branch migration. In the full resolvosome a probable DNA-RuvA(4)-RuvB(12)-RuvC(2) complex forms which resolves the HJ.

Its subcellular location is the cytoplasm. The enzyme catalyses ATP + H2O = ADP + phosphate + H(+). Its function is as follows. The RuvA-RuvB-RuvC complex processes Holliday junction (HJ) DNA during genetic recombination and DNA repair, while the RuvA-RuvB complex plays an important role in the rescue of blocked DNA replication forks via replication fork reversal (RFR). RuvA specifically binds to HJ cruciform DNA, conferring on it an open structure. The RuvB hexamer acts as an ATP-dependent pump, pulling dsDNA into and through the RuvAB complex. RuvB forms 2 homohexamers on either side of HJ DNA bound by 1 or 2 RuvA tetramers; 4 subunits per hexamer contact DNA at a time. Coordinated motions by a converter formed by DNA-disengaged RuvB subunits stimulates ATP hydrolysis and nucleotide exchange. Immobilization of the converter enables RuvB to convert the ATP-contained energy into a lever motion, pulling 2 nucleotides of DNA out of the RuvA tetramer per ATP hydrolyzed, thus driving DNA branch migration. The RuvB motors rotate together with the DNA substrate, which together with the progressing nucleotide cycle form the mechanistic basis for DNA recombination by continuous HJ branch migration. Branch migration allows RuvC to scan DNA until it finds its consensus sequence, where it cleaves and resolves cruciform DNA. This chain is Holliday junction branch migration complex subunit RuvB, found in Mycolicibacterium smegmatis (strain ATCC 700084 / mc(2)155) (Mycobacterium smegmatis).